The primary structure comprises 370 residues: Ornithine carbamoyltransferase, mitochondrial (370 aa).

The N-terminal 38 residues, 1 to 38 (MPSPLRTAPQPPLRAFHNPPALRRLYSSTSHSAATPAT), are a transit peptide targeting the mitochondrion. Residues 97–100 (STRT), Arg148, His175, and Gln178 each bind carbamoyl phosphate. Positions 216, 282, 286, and 287 each coordinate L-ornithine. Catalysis depends on Cys324, which acts as the Proton acceptor. Residues 324-325 (CL) and Arg351 contribute to the carbamoyl phosphate site.

Belongs to the aspartate/ornithine carbamoyltransferase superfamily. OTCase family. As to quaternary structure, homotrimer.

It localises to the mitochondrion matrix. The enzyme catalyses carbamoyl phosphate + L-ornithine = L-citrulline + phosphate + H(+). The protein operates within amino-acid biosynthesis; L-arginine biosynthesis; L-arginine from L-ornithine and carbamoyl phosphate: step 1/3. In Aspergillus niger, this protein is Ornithine carbamoyltransferase, mitochondrial (argB).